The following is an 802-amino-acid chain: Bifunctional purine biosynthetic protein ADE5,7 (802 aa).

The tract at residues 1 to 444 is GARS; that stretch reads MPEITAFPQP…FRRDIAYRAL (444 aa). Residues 126–339 form the ATP-grasp domain; sequence KEFMARHNIP…LAEVLLACVE (214 aa). 157 to 218 serves as a coordination point for ATP; it reads KPFTSGRSVI…EEYLSGPEIS (62 aa). 2 residues coordinate Mg(2+): glutamate 307 and asparagine 309. Residues 455-788 are AIRS; sequence LTYAAAGVSV…EAWVIGEVQE (334 aa).

In the N-terminal section; belongs to the GARS family. This sequence in the C-terminal section; belongs to the AIR synthase family. Homodimer. Mg(2+) serves as cofactor. It depends on Mn(2+) as a cofactor.

The protein resides in the cytoplasm. Its subcellular location is the cytosol. It carries out the reaction 2-formamido-N(1)-(5-O-phospho-beta-D-ribosyl)acetamidine + ATP = 5-amino-1-(5-phospho-beta-D-ribosyl)imidazole + ADP + phosphate + H(+). The catalysed reaction is 5-phospho-beta-D-ribosylamine + glycine + ATP = N(1)-(5-phospho-beta-D-ribosyl)glycinamide + ADP + phosphate + H(+). Its pathway is purine metabolism; IMP biosynthesis via de novo pathway; 5-amino-1-(5-phospho-D-ribosyl)imidazole from N(2)-formyl-N(1)-(5-phospho-D-ribosyl)glycinamide: step 2/2. It functions in the pathway purine metabolism; IMP biosynthesis via de novo pathway; N(1)-(5-phospho-D-ribosyl)glycinamide from 5-phospho-alpha-D-ribose 1-diphosphate: step 2/2. Its function is as follows. Catalyzes the second and fifth step in the 'de novo' purine biosynthesis pathway; contains phosphoribosylamine--glycine ligase (GARS) and phosphoribosylformylglycinamidine cyclo-ligase (AIRS) activities. This chain is Bifunctional purine biosynthetic protein ADE5,7, found in Cryptococcus neoformans var. grubii serotype A (strain H99 / ATCC 208821 / CBS 10515 / FGSC 9487) (Filobasidiella neoformans var. grubii).